Here is a 247-residue protein sequence, read N- to C-terminus: E3 ubiquitin-protein ligase RNF182 (247 aa).

An RING-type zinc finger spans residues 20–68 (CKICYNRYNLKQRKPKVLECCHRVCAKCLYKIIDFGDSPQGVIVCPFCR). 2 consecutive transmembrane segments (helical) span residues 184-204 (VLVW…IYLL) and 211-231 (LGVV…VYGF).

Interacts with ATP6V0C.

Its subcellular location is the membrane. The protein localises to the cytoplasm. The enzyme catalyses S-ubiquitinyl-[E2 ubiquitin-conjugating enzyme]-L-cysteine + [acceptor protein]-L-lysine = [E2 ubiquitin-conjugating enzyme]-L-cysteine + N(6)-ubiquitinyl-[acceptor protein]-L-lysine.. It participates in protein modification; protein ubiquitination. Functionally, E3 ubiquitin-protein ligase that mediates the ubiquitination of ATP6V0C and targets it to degradation via the ubiquitin-proteasome pathway. Also plays a role in the inhibition of TLR-triggered innate immune response by mediating 'Lys'-48-linked ubiquitination and subsequent degradation of NF-kappa-B component RELA. The protein is E3 ubiquitin-protein ligase RNF182 (RNF182) of Ailuropoda melanoleuca (Giant panda).